The sequence spans 159 residues: Endoribonuclease YbeY (159 aa).

Residues His-125, His-129, and His-135 each contribute to the Zn(2+) site.

The protein belongs to the endoribonuclease YbeY family. It depends on Zn(2+) as a cofactor.

The protein resides in the cytoplasm. In terms of biological role, single strand-specific metallo-endoribonuclease involved in late-stage 70S ribosome quality control and in maturation of the 3' terminus of the 16S rRNA. This chain is Endoribonuclease YbeY, found in Enterococcus faecalis (strain ATCC 700802 / V583).